A 189-amino-acid chain; its full sequence is Interferon alpha-H (189 aa).

Residues 1–23 (MAPAWSFLLALLLLSCNAICSLG) form the signal peptide. Disulfide bonds link C24–C122 and C52–C162.

It belongs to the alpha/beta interferon family.

The protein localises to the secreted. Produced by macrophages, IFN-alpha have antiviral activities. Interferon stimulates the production of two enzymes: a protein kinase and an oligoadenylate synthetase. The sequence is that of Interferon alpha-H (IFNAH) from Bos taurus (Bovine).